We begin with the raw amino-acid sequence, 324 residues long: tRNA-modifying protein YgfZ (324 aa).

Trp-184 contacts folate.

This sequence belongs to the tRNA-modifying YgfZ family.

Its subcellular location is the cytoplasm. In terms of biological role, folate-binding protein involved in regulating the level of ATP-DnaA and in the modification of some tRNAs. It is probably a key factor in regulatory networks that act via tRNA modification, such as initiation of chromosomal replication. The polypeptide is tRNA-modifying protein YgfZ (Vibrio vulnificus (strain CMCP6)).